A 221-amino-acid polypeptide reads, in one-letter code: Small ribosomal subunit protein uS3 (221 aa).

Residues Ile-39 to Lys-108 form the KH type-2 domain.

This sequence belongs to the universal ribosomal protein uS3 family. Part of the 30S ribosomal subunit. Forms a tight complex with proteins S10 and S14.

Functionally, binds the lower part of the 30S subunit head. Binds mRNA in the 70S ribosome, positioning it for translation. The sequence is that of Small ribosomal subunit protein uS3 from Clostridium beijerinckii (strain ATCC 51743 / NCIMB 8052) (Clostridium acetobutylicum).